The following is a 132-amino-acid chain: ATP synthase epsilon chain, chloroplastic (132 aa).

The protein belongs to the ATPase epsilon chain family. In terms of assembly, F-type ATPases have 2 components, CF(1) - the catalytic core - and CF(0) - the membrane proton channel. CF(1) has five subunits: alpha(3), beta(3), gamma(1), delta(1), epsilon(1). CF(0) has three main subunits: a, b and c.

It is found in the plastid. The protein localises to the chloroplast thylakoid membrane. Functionally, produces ATP from ADP in the presence of a proton gradient across the membrane. This chain is ATP synthase epsilon chain, chloroplastic, found in Calycanthus floridus var. glaucus (Eastern sweetshrub).